The chain runs to 302 residues: Gigasin-6 (302 aa).

Positions 1-22 (MSSRNLLYSSVVLFLVLFYCHG) are cleaved as a signal peptide. A helical transmembrane segment spans residues 75 to 95 (ITTDTLFGLGGISALFANILI).

In terms of tissue distribution, component of the organic matrix of calcified shell layers.

It localises to the membrane. In Magallana gigas (Pacific oyster), this protein is Gigasin-6.